The sequence spans 892 residues: Alanine--tRNA ligase (892 aa).

Positions 574, 578, 676, and 680 each coordinate Zn(2+).

The protein belongs to the class-II aminoacyl-tRNA synthetase family. Requires Zn(2+) as cofactor.

The protein localises to the cytoplasm. The enzyme catalyses tRNA(Ala) + L-alanine + ATP = L-alanyl-tRNA(Ala) + AMP + diphosphate. Its function is as follows. Catalyzes the attachment of alanine to tRNA(Ala) in a two-step reaction: alanine is first activated by ATP to form Ala-AMP and then transferred to the acceptor end of tRNA(Ala). Also edits incorrectly charged Ser-tRNA(Ala) and Gly-tRNA(Ala) via its editing domain. In Prochlorococcus marinus (strain MIT 9313), this protein is Alanine--tRNA ligase.